The following is a 366-amino-acid chain: Ribosome-binding ATPase YchF (366 aa).

Residues 3 to 259 (LTAGIVGLPN…LEGEEKQMFL (257 aa)) form the OBG-type G domain. Residue 12 to 17 (NVGKST) participates in ATP binding. Positions 16 and 36 each coordinate Mg(2+). The 84-residue stretch at 281–364 (GLATYFTAGE…QDGDVIHFRF (84 aa)) folds into the TGS domain.

Belongs to the TRAFAC class OBG-HflX-like GTPase superfamily. OBG GTPase family. YchF/OLA1 subfamily. It depends on Mg(2+) as a cofactor.

Its function is as follows. ATPase that binds to both the 70S ribosome and the 50S ribosomal subunit in a nucleotide-independent manner. In Bacillus subtilis (strain 168), this protein is Ribosome-binding ATPase YchF.